An 84-amino-acid polypeptide reads, in one-letter code: MIAMFTTLLMFYVSQNNIISLLIAIEILLLTVTVKIIYLGGQFDDVQSTMFALFIITLAGAESAIGLSLLVSYYRLRGKVTNIL.

2 helical membrane-spanning segments follow: residues 18-38 (IISLLIAIEILLLTVTVKIIY) and 51-71 (FALFIITLAGAESAIGLSLLV).

It belongs to the complex I subunit 4L family.

It is found in the mitochondrion membrane. It catalyses the reaction a ubiquinone + NADH + 5 H(+)(in) = a ubiquinol + NAD(+) + 4 H(+)(out). Core subunit of the mitochondrial membrane respiratory chain NADH dehydrogenase (Complex I) that is believed to belong to the minimal assembly required for catalysis. Complex I functions in the transfer of electrons from NADH to the respiratory chain. The immediate electron acceptor for the enzyme is believed to be ubiquinone. In Debaryomyces hansenii (strain ATCC 36239 / CBS 767 / BCRC 21394 / JCM 1990 / NBRC 0083 / IGC 2968) (Yeast), this protein is NADH-ubiquinone oxidoreductase chain 4L (ND4L).